Consider the following 932-residue polypeptide: Isoleucine--tRNA ligase (932 aa).

A 'HIGH' region motif is present at residues 57–67 (PYANGNIHLGH). Glutamate 552 is a binding site for L-isoleucyl-5'-AMP. The 'KMSKS' region signature appears at 593–597 (KMSKS). Lysine 596 provides a ligand contact to ATP. 4 residues coordinate Zn(2+): cysteine 889, cysteine 892, cysteine 911, and cysteine 914.

It belongs to the class-I aminoacyl-tRNA synthetase family. IleS type 1 subfamily. In terms of assembly, monomer. Zn(2+) serves as cofactor.

The protein localises to the cytoplasm. It carries out the reaction tRNA(Ile) + L-isoleucine + ATP = L-isoleucyl-tRNA(Ile) + AMP + diphosphate. Its function is as follows. Catalyzes the attachment of isoleucine to tRNA(Ile). As IleRS can inadvertently accommodate and process structurally similar amino acids such as valine, to avoid such errors it has two additional distinct tRNA(Ile)-dependent editing activities. One activity is designated as 'pretransfer' editing and involves the hydrolysis of activated Val-AMP. The other activity is designated 'posttransfer' editing and involves deacylation of mischarged Val-tRNA(Ile). This is Isoleucine--tRNA ligase from Lactococcus lactis subsp. lactis (strain IL1403) (Streptococcus lactis).